A 267-amino-acid polypeptide reads, in one-letter code: tRNA-cytidine(32) 2-sulfurtransferase 1 (267 aa).

The short motif at 42 to 47 (SGGKDS) is the PP-loop motif element. Positions 117, 120, and 208 each coordinate [4Fe-4S] cluster.

Belongs to the TtcA family. Homodimer. It depends on Mg(2+) as a cofactor. [4Fe-4S] cluster is required as a cofactor.

The protein localises to the cytoplasm. It catalyses the reaction cytidine(32) in tRNA + S-sulfanyl-L-cysteinyl-[cysteine desulfurase] + AH2 + ATP = 2-thiocytidine(32) in tRNA + L-cysteinyl-[cysteine desulfurase] + A + AMP + diphosphate + H(+). The protein operates within tRNA modification. Catalyzes the ATP-dependent 2-thiolation of cytidine in position 32 of tRNA, to form 2-thiocytidine (s(2)C32). The sulfur atoms are provided by the cysteine/cysteine desulfurase (IscS) system. The protein is tRNA-cytidine(32) 2-sulfurtransferase 1 of Francisella tularensis subsp. tularensis (strain FSC 198).